Here is a 1149-residue protein sequence, read N- to C-terminus: Translocase of chloroplast 126, chloroplastic (1149 aa).

3 disordered regions span residues 1–206 (MDAL…GKEL), 219–292 (NMPN…RELT), and 315–431 (LELK…VNPS). Residues 131–142 (LYYDDYGDDGEV) are compositionally biased toward acidic residues. Over residues 152-168 (TSSSSSSSSSECSSSAS) the composition is skewed to low complexity. Acidic residues-rich tracts occupy residues 271 to 280 (YDQEGEDADS) and 335 to 357 (GESD…DEHE). The segment covering 406 to 429 (TAATDTQSSNAASSTQVAGTTDVN) has biased composition (polar residues). The region spanning 514–743 (DFACTILVLG…KLQDTAAPGR (230 aa)) is the AIG1-type G domain. The interval 523-530 (GKTGVGKS) is G1. 526–531 (GVGKSA) serves as a coordination point for GTP. Position 530 (Ser530) interacts with Mg(2+). The tract at residues 550 to 554 (STTNV) is G2. The interval 570-573 (DTPG) is G3. The interval 642–645 (THAS) is G4. GTP contacts are provided by residues His643 and 691 to 692 (EN). Residues 691–693 (ENH) are G5. Disordered regions lie at residues 769–800 (KLPD…LPPF) and 833–869 (KQHR…DEAG). The segment covering 773 to 796 (EQLDESDESDDDEEDEEEGDEYDD) has biased composition (acidic residues). 2 stretches are compositionally biased toward basic and acidic residues: residues 833 to 842 (KQHREQLQRR) and 852 to 862 (MRKEGLSHPAD). The helical transmembrane segment at 1123 to 1144 (MVLIGIVPILRSLINCRFGFGG) threads the bilayer.

Belongs to the TRAFAC class TrmE-Era-EngA-EngB-Septin-like GTPase superfamily. AIG1/Toc34/Toc159-like paraseptin GTPase family. TOC159 subfamily. Part of the TOC core complex. It depends on Mg(2+) as a cofactor.

Its subcellular location is the plastid. The protein localises to the chloroplast outer membrane. Its function is as follows. GTPase involved in protein precursor import into chloroplasts. Seems to recognize chloroplast-destined precursor proteins and regulate their presentation to the translocation channel through GTP hydrolysis. Probably specialized in the import of nuclear encoded non-photosynthetic preproteins from the cytoplasm to the chloroplast. The chain is Translocase of chloroplast 126, chloroplastic from Physcomitrium patens (Spreading-leaved earth moss).